The primary structure comprises 324 residues: Malate dehydrogenase (324 aa).

NAD(+)-binding positions include Gly-21–Gly-26 and Asp-45. Substrate is bound by residues Arg-94 and Arg-100. NAD(+) is bound by residues Asn-107 and Val-130–Asn-132. Substrate-binding residues include Asn-132 and Arg-163. Catalysis depends on His-187, which acts as the Proton acceptor.

This sequence belongs to the LDH/MDH superfamily. MDH type 3 family.

It catalyses the reaction (S)-malate + NAD(+) = oxaloacetate + NADH + H(+). Functionally, catalyzes the reversible oxidation of malate to oxaloacetate. In Trichormus variabilis (strain ATCC 29413 / PCC 7937) (Anabaena variabilis), this protein is Malate dehydrogenase.